We begin with the raw amino-acid sequence, 122 residues long: Small ribosomal subunit protein bS6 (122 aa).

Belongs to the bacterial ribosomal protein bS6 family.

Functionally, binds together with bS18 to 16S ribosomal RNA. This is Small ribosomal subunit protein bS6 (rpsF) from Neisseria meningitidis serogroup B (strain ATCC BAA-335 / MC58).